The primary structure comprises 214 residues: UPF0690 protein C1orf52 homolog (214 aa).

Disordered stretches follow at residues 1–66 (MSDE…SVSK) and 81–214 (DSRA…QCLD). Over residues 32–44 (PEATASSAPAEPQ) the composition is skewed to low complexity. 2 stretches are compositionally biased toward basic and acidic residues: residues 49–61 (RAAE…DELF) and 81–97 (DSRA…EFKV). Acidic residues predominate over residues 152 to 165 (EEEEEEQQPDSDDD). Position 162 is a phosphoserine (S162). 2 stretches are compositionally biased toward basic and acidic residues: residues 179–192 (VETF…KRDI) and 200–214 (NFVE…QCLD).

Belongs to the UPF0690 family.

This is UPF0690 protein C1orf52 homolog from Danio rerio (Zebrafish).